The following is a 441-amino-acid chain: Ribulose bisphosphate carboxylase large chain (441 aa).

Positions 89 and 139 each coordinate substrate. Lys141 (proton acceptor) is an active-site residue. Substrate is bound at residue Lys143. Mg(2+) contacts are provided by Lys167, Asp169, and Glu170. N6-carboxylysine is present on Lys167. His260 serves as the catalytic Proton acceptor. The substrate site is built by Arg261, His293, and Ser345.

Belongs to the RuBisCO large chain family. Type I subfamily. In terms of assembly, heterohexadecamer of 8 large chains and 8 small chains; disulfide-linked. The disulfide link is formed within the large subunit homodimers. It depends on Mg(2+) as a cofactor. Post-translationally, the disulfide bond which can form in the large chain dimeric partners within the hexadecamer appears to be associated with oxidative stress and protein turnover.

It localises to the plastid. Its subcellular location is the chloroplast. It carries out the reaction 2 (2R)-3-phosphoglycerate + 2 H(+) = D-ribulose 1,5-bisphosphate + CO2 + H2O. The catalysed reaction is D-ribulose 1,5-bisphosphate + O2 = 2-phosphoglycolate + (2R)-3-phosphoglycerate + 2 H(+). In terms of biological role, ruBisCO catalyzes two reactions: the carboxylation of D-ribulose 1,5-bisphosphate, the primary event in carbon dioxide fixation, as well as the oxidative fragmentation of the pentose substrate in the photorespiration process. Both reactions occur simultaneously and in competition at the same active site. This is Ribulose bisphosphate carboxylase large chain from Symphoricarpos albus (Common snowberry).